We begin with the raw amino-acid sequence, 688 residues long: UvrABC system protein B (688 aa).

A Helicase ATP-binding domain is found at 31-188 (GRVNAGEPDV…RKFVSMQYQR (158 aa)). 44-51 (GATGTGKS) is an ATP binding site. A Beta-hairpin motif is present at residues 97–120 (YYDYYQPEAYVPQTDTFIEKDSSV). The 154-residue stretch at 434 to 587 (QIDDLLEQIR…QVAYNTEHGI (154 aa)) folds into the Helicase C-terminal domain. The disordered stretch occupies residues 607–632 (GEDTKKMLEGRGGGKRSPTPNLRREG). The UVR domain occupies 642–677 (ETIISDLNDQMLQAAGELKFELAARLRDELGDLKRE).

Belongs to the UvrB family. In terms of assembly, forms a heterotetramer with UvrA during the search for lesions. Interacts with UvrC in an incision complex.

Its subcellular location is the cytoplasm. Its function is as follows. The UvrABC repair system catalyzes the recognition and processing of DNA lesions. A damage recognition complex composed of 2 UvrA and 2 UvrB subunits scans DNA for abnormalities. Upon binding of the UvrA(2)B(2) complex to a putative damaged site, the DNA wraps around one UvrB monomer. DNA wrap is dependent on ATP binding by UvrB and probably causes local melting of the DNA helix, facilitating insertion of UvrB beta-hairpin between the DNA strands. Then UvrB probes one DNA strand for the presence of a lesion. If a lesion is found the UvrA subunits dissociate and the UvrB-DNA preincision complex is formed. This complex is subsequently bound by UvrC and the second UvrB is released. If no lesion is found, the DNA wraps around the other UvrB subunit that will check the other stand for damage. The chain is UvrABC system protein B from Clavibacter sepedonicus (Clavibacter michiganensis subsp. sepedonicus).